We begin with the raw amino-acid sequence, 302 residues long: Probable movement protein 4b (302 aa).

Transports viral genome to neighboring plant cells directly through plasmosdesmata, without any budding. The movement protein allows efficient cell to cell propagation, by bypassing the host cell wall barrier. This is Probable movement protein 4b (4b) from Embergeria (Garden lettuce).